We begin with the raw amino-acid sequence, 76 residues long: U7-lycotoxin-Ls1b (76 aa).

An N-terminal signal peptide occupies residues 1–22 (MKLISFTGLALLLIVSLIDVEA). Residues 23-26 (QNEG) constitute a propeptide that is removed on maturation.

The protein belongs to the neurotoxin 19 (CSTX) family. 07 (U7-Lctx) subfamily. In terms of processing, contains 4 disulfide bonds. Expressed by the venom gland.

It localises to the secreted. The protein is U7-lycotoxin-Ls1b of Lycosa singoriensis (Wolf spider).